We begin with the raw amino-acid sequence, 317 residues long: Phosphatidylglycerol--prolipoprotein diacylglyceryl transferase 2 (317 aa).

4 helical membrane-spanning segments follow: residues 19–39 (IPLRAYAFCIILGVFAAVWLG), 51–71 (GVIADVTLWAVPFGLVGGRLY), 93–113 (VWEGGLGIWGAIALGAVGAWI), and 120–140 (IPLPAFADAVAPGIVLAQAIG). Arg141 is an a 1,2-diacyl-sn-glycero-3-phospho-(1'-sn-glycerol) binding site. A run of 3 helical transmembrane segments spans residues 180–200 (PTFLYESLWNIGVAALILWAA), 211–230 (FALYVAAYTVGRFGTEYLRI), and 241–261 (LNNWTSVLVFLGAVACLVVSA). The interval 275 to 317 (GAGADGRTDDPRPADASVGLASGPPGNSTPRRATESWNVRNRS) is disordered. Residues 299 to 317 (PGNSTPRRATESWNVRNRS) show a composition bias toward polar residues.

This sequence belongs to the Lgt family.

The protein resides in the cell membrane. The catalysed reaction is L-cysteinyl-[prolipoprotein] + a 1,2-diacyl-sn-glycero-3-phospho-(1'-sn-glycerol) = an S-1,2-diacyl-sn-glyceryl-L-cysteinyl-[prolipoprotein] + sn-glycerol 1-phosphate + H(+). The protein operates within protein modification; lipoprotein biosynthesis (diacylglyceryl transfer). Its function is as follows. Catalyzes the transfer of the diacylglyceryl group from phosphatidylglycerol to the sulfhydryl group of the N-terminal cysteine of a prolipoprotein, the first step in the formation of mature lipoproteins. The protein is Phosphatidylglycerol--prolipoprotein diacylglyceryl transferase 2 of Streptomyces coelicolor (strain ATCC BAA-471 / A3(2) / M145).